Reading from the N-terminus, the 273-residue chain is Dermonecrotic toxin LapSicTox-alphaIB1aiv (273 aa).

Histidine 5 is an active-site residue. Residues glutamate 25 and aspartate 27 each contribute to the Mg(2+) site. Histidine 41 serves as the catalytic Nucleophile. Disulfide bonds link cysteine 45–cysteine 51 and cysteine 47–cysteine 190. Residue aspartate 85 coordinates Mg(2+). The N-linked (GlcNAc...) asparagine glycan is linked to asparagine 250.

The protein belongs to the arthropod phospholipase D family. Class II subfamily. The cofactor is Mg(2+). In terms of tissue distribution, expressed by the venom gland.

The protein resides in the secreted. The enzyme catalyses an N-(acyl)-sphingosylphosphocholine = an N-(acyl)-sphingosyl-1,3-cyclic phosphate + choline. It carries out the reaction an N-(acyl)-sphingosylphosphoethanolamine = an N-(acyl)-sphingosyl-1,3-cyclic phosphate + ethanolamine. The catalysed reaction is a 1-acyl-sn-glycero-3-phosphocholine = a 1-acyl-sn-glycero-2,3-cyclic phosphate + choline. It catalyses the reaction a 1-acyl-sn-glycero-3-phosphoethanolamine = a 1-acyl-sn-glycero-2,3-cyclic phosphate + ethanolamine. Dermonecrotic toxins cleave the phosphodiester linkage between the phosphate and headgroup of certain phospholipids (sphingolipid and lysolipid substrates), forming an alcohol (often choline) and a cyclic phosphate. This toxin acts on sphingomyelin (SM). It may also act on ceramide phosphoethanolamine (CPE), lysophosphatidylcholine (LPC) and lysophosphatidylethanolamine (LPE), but not on lysophosphatidylserine (LPS), and lysophosphatidylglycerol (LPG). It acts by transphosphatidylation, releasing exclusively cyclic phosphate products as second products. Induces dermonecrosis, hemolysis, increased vascular permeability, edema, inflammatory response, and platelet aggregation. In Loxosceles apachea (Apache recluse spider), this protein is Dermonecrotic toxin LapSicTox-alphaIB1aiv.